A 150-amino-acid polypeptide reads, in one-letter code: Small ribosomal subunit protein uS11 (150 aa).

A disordered region spans residues 130–150 (DVTPIPSDSTRRKSGRRGRRL). A compositionally biased stretch (basic residues) spans 141–150 (RKSGRRGRRL).

This sequence belongs to the universal ribosomal protein uS11 family.

This is Small ribosomal subunit protein uS11 (RPS14) from Lupinus luteus (European yellow lupine).